Reading from the N-terminus, the 508-residue chain is Steroid 17-alpha-hydroxylase/17,20 lyase (508 aa).

Cys-445 lines the heme pocket.

It belongs to the cytochrome P450 family. It depends on heme as a cofactor.

Its subcellular location is the membrane. The catalysed reaction is a C21-steroid + reduced [NADPH--hemoprotein reductase] + O2 = a 17alpha-hydroxy-C21-steroid + oxidized [NADPH--hemoprotein reductase] + H2O + H(+). The enzyme catalyses 17alpha-hydroxyprogesterone + reduced [NADPH--hemoprotein reductase] + O2 = androst-4-ene-3,17-dione + acetate + oxidized [NADPH--hemoprotein reductase] + H2O + 2 H(+). It carries out the reaction 17alpha-hydroxypregnenolone + reduced [NADPH--hemoprotein reductase] + O2 = 3beta-hydroxyandrost-5-en-17-one + acetate + oxidized [NADPH--hemoprotein reductase] + H2O + 2 H(+). It participates in lipid metabolism; steroid biosynthesis. Functionally, conversion of pregnenolone and progesterone to their 17-alpha-hydroxylated products and subsequently to dehydroepiandrosterone (DHEA) and androstenedione. Catalyzes both the 17-alpha-hydroxylation and the 17,20-lyase reaction. This is Steroid 17-alpha-hydroxylase/17,20 lyase (CYP17A1) from Gallus gallus (Chicken).